The sequence spans 207 residues: Small heat shock protein hspG7 (207 aa).

In terms of domain architecture, sHSP spans 30–207 (KTIIDILPPM…YSNTIKININ (178 aa)). Low complexity-rich tracts occupy residues 84–101 (QQQQ…SSST) and 122–135 (STTS…ATTT). Positions 84-149 (QQQQLVIEKS…EDENKTKSSD (66 aa)) are disordered. Basic and acidic residues predominate over residues 136–149 (KENKEDENKTKSSD).

The protein belongs to the small heat shock protein (HSP20) family.

This is Small heat shock protein hspG7 (hspG7) from Dictyostelium discoideum (Social amoeba).